The sequence spans 81 residues: Small ribosomal subunit protein bS18A (81 aa).

The protein belongs to the bacterial ribosomal protein bS18 family. As to quaternary structure, part of the 30S ribosomal subunit. Forms a tight heterodimer with protein bS6.

In terms of biological role, binds as a heterodimer with protein bS6 to the central domain of the 16S rRNA, where it helps stabilize the platform of the 30S subunit. This is Small ribosomal subunit protein bS18A from Saccharopolyspora erythraea (strain ATCC 11635 / DSM 40517 / JCM 4748 / NBRC 13426 / NCIMB 8594 / NRRL 2338).